Reading from the N-terminus, the 474-residue chain is L-arabinose isomerase (474 aa).

Residues glutamate 306, glutamate 331, histidine 348, and histidine 447 each coordinate Mn(2+).

The protein belongs to the arabinose isomerase family. Mn(2+) serves as cofactor.

The enzyme catalyses beta-L-arabinopyranose = L-ribulose. The protein operates within carbohydrate degradation; L-arabinose degradation via L-ribulose; D-xylulose 5-phosphate from L-arabinose (bacterial route): step 1/3. Its function is as follows. Catalyzes the conversion of L-arabinose to L-ribulose. The polypeptide is L-arabinose isomerase (Leuconostoc mesenteroides subsp. mesenteroides (strain ATCC 8293 / DSM 20343 / BCRC 11652 / CCM 1803 / JCM 6124 / NCDO 523 / NBRC 100496 / NCIMB 8023 / NCTC 12954 / NRRL B-1118 / 37Y)).